The following is a 331-amino-acid chain: Anthranilate phosphoribosyltransferase (331 aa).

5-phospho-alpha-D-ribose 1-diphosphate-binding positions include glycine 79, 82-83, threonine 87, 89-92, 107-115, and serine 119; these read GD, NVST, and KHGNYGVSS. Anthranilate is bound at residue glycine 79. Mg(2+) is bound at residue serine 91. Residue asparagine 110 coordinates anthranilate. Arginine 165 provides a ligand contact to anthranilate. Mg(2+) contacts are provided by aspartate 223 and glutamate 224.

This sequence belongs to the anthranilate phosphoribosyltransferase family. As to quaternary structure, homodimer. Mg(2+) serves as cofactor.

The catalysed reaction is N-(5-phospho-beta-D-ribosyl)anthranilate + diphosphate = 5-phospho-alpha-D-ribose 1-diphosphate + anthranilate. The protein operates within amino-acid biosynthesis; L-tryptophan biosynthesis; L-tryptophan from chorismate: step 2/5. Catalyzes the transfer of the phosphoribosyl group of 5-phosphorylribose-1-pyrophosphate (PRPP) to anthranilate to yield N-(5'-phosphoribosyl)-anthranilate (PRA). This is Anthranilate phosphoribosyltransferase from Christiangramia forsetii (strain DSM 17595 / CGMCC 1.15422 / KT0803) (Gramella forsetii).